A 114-amino-acid chain; its full sequence is Fluoride-specific ion channel FluC 2 (114 aa).

4 helical membrane-spanning segments follow: residues 3–23, 31–51, 57–77, and 92–112; these read YVII…ECWL, LMTA…WILA, GIEL…TFCM, and MIYL…GWNV. Residues Gly-67 and Thr-70 each contribute to the Na(+) site.

The protein belongs to the fluoride channel Fluc/FEX (TC 1.A.43) family.

The protein resides in the cell membrane. The enzyme catalyses fluoride(in) = fluoride(out). Na(+) is not transported, but it plays an essential structural role and its presence is essential for fluoride channel function. Fluoride-specific ion channel. Important for reducing fluoride concentration in the cell, thus reducing its toxicity. The protein is Fluoride-specific ion channel FluC 2 of Shouchella clausii (strain KSM-K16) (Alkalihalobacillus clausii).